A 617-amino-acid polypeptide reads, in one-letter code: Chaperone protein HscA homolog (617 aa).

This sequence belongs to the heat shock protein 70 family.

Chaperone involved in the maturation of iron-sulfur cluster-containing proteins. Has a low intrinsic ATPase activity which is markedly stimulated by HscB. This Vibrio campbellii (strain ATCC BAA-1116) protein is Chaperone protein HscA homolog.